Reading from the N-terminus, the 637-residue chain is 3D-(3,5/4)-trihydroxycyclohexane-1,2-dione hydrolase (637 aa).

Glu-66 lines the thiamine diphosphate pocket. The interval 442-522 (SLPGDLQRLW…INVLLFDNSG (81 aa)) is thiamine pyrophosphate binding. Residues Asp-493 and Asn-520 each coordinate Mg(2+).

Belongs to the TPP enzyme family. The cofactor is Mg(2+). Requires thiamine diphosphate as cofactor.

The catalysed reaction is 3D-3,5/4-trihydroxycyclohexane-1,2-dione + H2O = 5-deoxy-D-glucuronate + H(+). It participates in polyol metabolism; myo-inositol degradation into acetyl-CoA; acetyl-CoA from myo-inositol: step 3/7. Its function is as follows. Involved in the cleavage of the C1-C2 bond of 3D-(3,5/4)-trihydroxycyclohexane-1,2-dione (THcHDO) to yield 5-deoxy-glucuronate (5DG). The chain is 3D-(3,5/4)-trihydroxycyclohexane-1,2-dione hydrolase from Bacillus velezensis (strain DSM 23117 / BGSC 10A6 / LMG 26770 / FZB42) (Bacillus amyloliquefaciens subsp. plantarum).